We begin with the raw amino-acid sequence, 394 residues long: Elongation factor Tu (394 aa).

The region spanning 10–204 (KPHINVGTIG…AMDNYIPIPE (195 aa)) is the tr-type G domain. The G1 stretch occupies residues 19–26 (GHVDHGKT). 19 to 26 (GHVDHGKT) provides a ligand contact to GTP. Thr-26 serves as a coordination point for Mg(2+). Positions 60–64 (GITIN) are G2. Residues 81–84 (DCPG) are G3. GTP-binding positions include 81 to 85 (DCPGH) and 136 to 139 (NKVD). Residues 136–139 (NKVD) are G4. The tract at residues 174-176 (SAL) is G5.

The protein belongs to the TRAFAC class translation factor GTPase superfamily. Classic translation factor GTPase family. EF-Tu/EF-1A subfamily. Monomer.

The protein localises to the cytoplasm. The enzyme catalyses GTP + H2O = GDP + phosphate + H(+). Its function is as follows. GTP hydrolase that promotes the GTP-dependent binding of aminoacyl-tRNA to the A-site of ribosomes during protein biosynthesis. In Methylacidiphilum infernorum (isolate V4) (Methylokorus infernorum (strain V4)), this protein is Elongation factor Tu.